Consider the following 378-residue polypeptide: IDS-type sesquiterpene synthase (378 aa).

Asp120 and Asp124 together coordinate Mg(2+). Positions 120–124 match the DDXXD motif motif; that stretch reads DDYVD.

Belongs to the terpene synthase family. The cofactor is Mg(2+). Highly expressed in male epidermal tissue associated with the cuticle of ventral sternites.

The catalysed reaction is (2Z,6E)-farnesyl diphosphate = (Z)-alpha-bisabolene + diphosphate. It participates in pheromone biosynthesis. Sesquiterpene alcohol synthase that catalyzes the formation of the pheromone precursor (Z)-alpha-bisabolene from (2Z,6E)-farnesyl diphosphate. This Nezara viridula (Southern green stink bug) protein is IDS-type sesquiterpene synthase.